The chain runs to 224 residues: Glutathione S-transferase U8 (224 aa).

In terms of domain architecture, GST N-terminal spans 5-85 (EHVKLLGLWG…YIEDTWKTTH (81 aa)). Glutathione contacts are provided by residues 15–16 (SP), 42–43 (NR), 56–57 (KV), and 69–70 (ES). The region spanning 91-213 (DPYERAMARF…LPPKEKLVAV (123 aa)) is the GST C-terminal domain. Residue T152 is modified to Phosphothreonine.

It belongs to the GST superfamily. Tau family.

It is found in the cytoplasm. It localises to the cytosol. The enzyme catalyses RX + glutathione = an S-substituted glutathione + a halide anion + H(+). Its function is as follows. May be involved in the conjugation of reduced glutathione to a wide number of exogenous and endogenous hydrophobic electrophiles and have a detoxification role against certain herbicides. This chain is Glutathione S-transferase U8 (GSTU8), found in Arabidopsis thaliana (Mouse-ear cress).